The chain runs to 220 residues: Protein CREG1 (220 aa).

Positions 1–31 are cleaved as a signal peptide; the sequence is MAARAPELARSLLAALLAPALVALLVSPASG. The interval 30-53 is disordered; it reads SGRGGRDHGDWDVDRRLPPLPPRE. Over residues 33 to 53 the composition is skewed to basic and acidic residues; sequence GGRDHGDWDVDRRLPPLPPRE. N-linked (GlcNAc...) asparagine glycosylation is found at asparagine 160 and asparagine 216.

It belongs to the CREG family. In terms of assembly, homodimer. Interacts with IGF2R; the interaction is dependent on glycosylation. In terms of processing, N-glycosylated. In terms of tissue distribution, widely expressed.

The protein localises to the secreted. May contribute to the transcriptional control of cell growth and differentiation. Antagonizes transcriptional activation and cellular transformation by the adenovirus E1A protein. The transcriptional control activity of cell growth requires interaction with IGF2R. The polypeptide is Protein CREG1 (Creg1) (Mus musculus (Mouse)).